A 261-amino-acid chain; its full sequence is Metallo-beta-lactamase fold-containing protein ST1585 (261 aa).

7 residues coordinate Zn(2+): His58, His60, Asp62, His63, His148, Asp165, and His207.

Belongs to the metallo-beta-lactamase superfamily. Monomer.

The polypeptide is Metallo-beta-lactamase fold-containing protein ST1585 (Sulfurisphaera tokodaii (strain DSM 16993 / JCM 10545 / NBRC 100140 / 7) (Sulfolobus tokodaii)).